Consider the following 231-residue polypeptide: Orotate phosphoribosyltransferase (231 aa).

Residues lysine 27, 79–80 (YK), arginine 106, lysine 107, lysine 110, histidine 112, and 133–141 (DDVMTAGTA) each bind 5-phospho-alpha-D-ribose 1-diphosphate. Residues threonine 137 and arginine 166 each contribute to the orotate site.

This sequence belongs to the purine/pyrimidine phosphoribosyltransferase family. PyrE subfamily. As to quaternary structure, homodimer. Mg(2+) serves as cofactor.

The enzyme catalyses orotidine 5'-phosphate + diphosphate = orotate + 5-phospho-alpha-D-ribose 1-diphosphate. It participates in pyrimidine metabolism; UMP biosynthesis via de novo pathway; UMP from orotate: step 1/2. Catalyzes the transfer of a ribosyl phosphate group from 5-phosphoribose 1-diphosphate to orotate, leading to the formation of orotidine monophosphate (OMP). This is Orotate phosphoribosyltransferase from Bifidobacterium longum (strain DJO10A).